We begin with the raw amino-acid sequence, 860 residues long: Semaphorin-3aa (860 aa).

The N-terminal stretch at 1–17 is a signal peptide; sequence MDYLVGIFLLLCGVALP. The Sema domain maps to 31-515; sequence RLKLSYNEML…SDLGISQMPL (485 aa). Asparagine 53 carries an N-linked (GlcNAc...) asparagine glycan. A disulfide bridge links cysteine 104 with cysteine 115. An N-linked (GlcNAc...) asparagine glycan is attached at asparagine 126. 4 disulfide bridges follow: cysteine 133–cysteine 142, cysteine 270–cysteine 382, cysteine 294–cysteine 342, and cysteine 518–cysteine 536. An Ig-like C2-type domain is found at 579-668; sequence GYSSVEERSV…FIQPLRRINL (90 aa). The N-linked (GlcNAc...) asparagine glycan is linked to asparagine 593. Cysteine 652 and cysteine 717 are joined by a disulfide. The tract at residues 725 to 860 is disordered; it reads KKPKGKKAPK…HEQQRPPRSV (136 aa). Polar residues-rich tracts occupy residues 748–764 and 782–818; these read TPQT…QRAQ and TGLQ…QPNQ. The segment covering 838–860 has biased composition (basic and acidic residues); it reads QLQENKRGRNRRTHEQQRPPRSV.

This sequence belongs to the semaphorin family.

The protein localises to the secreted. Functionally, may influence outgrowth by a variety of growth cones including those of the posterior lateral line ganglion. This chain is Semaphorin-3aa (sema3aa), found in Danio rerio (Zebrafish).